The following is a 282-amino-acid chain: MHSQTRAAVVTGAASGIGLALSARFARAGAGVVMADVEGGALHRRAAELIAEGARVTAVTADLTDPDAVERLAETAFDRLGDIDVVCNNAGVLGPVGQPLWEVPLERMRQVFEVNHWAHVLVARAFVPRLLERGRPAHLIHTASMSAFVVGAGSAAYAASKHADLAVARSLRADPPGDLRGTAVRVSVLCPGRVDTPMVEGLTAPRGAGGDTSVSAEDVAGVVWEALGSDRFYLFSNSDAPLRLRDQFDDVWRHVPLPPPSPEEELWPVPKTTTATTATTKH.

Residue G12 to D36 participates in NAD(+) binding. Substrate is bound at residue S144. Y157 acts as the Proton acceptor in catalysis. K161 provides a ligand contact to NAD(+). The segment at P258–H282 is disordered. The span at W267–H282 shows a compositional bias: low complexity.

This sequence belongs to the short-chain dehydrogenases/reductases (SDR) family.

It carries out the reaction 1-deoxy-11beta-hydroxypentalenate + NAD(+) = 1-deoxy-11-oxopentalenate + NADH + H(+). It participates in antibiotic biosynthesis; pentalenolactone biosynthesis. Its function is as follows. Catalyzes the oxidation of 1-deoxy-11-beta-hydroxypentalenic acid to 1-deoxy-11-oxopentalenic acid in the biosynthesis of pentalenolactone antibiotic. The sequence is that of 1-deoxy-11-beta-hydroxypentalenate dehydrogenase (pntF) from Streptomyces arenae.